A 1366-amino-acid chain; its full sequence is MAERADLVFHNKVIDGAAMKRLISRLIDHFGMAYTSHILDQVKTLGFQQATATSISLGIDDLLTIPSKGWLVQDAEQQSLILEKHHHYGNVHAVEKLRQSIEIWYATSEYLRQEMNPNFRMTDPSNPVHLMSFSGARGNASQVHQLVGMRGLMSDPQGQMIDLPIQSNLREGLSLTEYIISCYGARKGVVDTAVRTSDAGYLTRRLVEVVQHIIVRRTDCGTIRSISVSPRNGVPERIFIQTLIGRVLADDIYIGPRCIAARNQDIGIGLVNRFISFRAQPIHIRTPFTCRSTSWICQLCYGRSPTHGDLVELGEAVGIIAGQSIGEPGTQLTLRTFHTGGVFTGGTAEHVRAPFNGKIKFNEDLVHPTRTRHGHPAFLCSIDLYVTIESQDIIHNVNIPPKSLILVQNDQYVESEQVIAEIRAGAATLNFKEKVRKHIYSESEGEMHWSTDVYHAPEYTYGNVHLLPKTSHLWILAVGTCRYSIVSFSLHKDQDQINAHSLSLEERYISDLSVTKDLARHQLFSSDSSSKKRGGTFDYARPDGSISNGHWNLQYPFILHENSDFLAKRRRNKFIIPLQYDQERDKELIPHFGVSIEIPINGILRRNSILAYFDDPRYRRNSSGITKYGAVEVDSILKKEDLIEYRGTKELSPKYQTKVDRFFFIPEEVHVLPGSSLIMVRNNSIIGVDTPLTLNIRSRVGGLVRVERKKKSIELKIFSGDIHFPGETDKISRHSGILIPPGTGKMTSKESKKLKNWIYVQRITPTKKKYFVSVRPVVTYEIADGINLATFFPKDLLQEGDNIQLRVVNYILYGNGKPIRGISHTSIQLVRTCLVLNWHQEEKSSIEDSHASFVEIKTNDLTCNFIRIELGKSPLLYTGKRNSVVSSGLINHNGLDYLNSNPFYSKAKIPSLTKQKGTGGTLLNGNKECQSLKILLSSNYSRIGPFNGLKYNTVTKQSIKADPVTPIRNCLGLLGTVVLKIANFYSSCHLITYNKTLLKKYFLIENLSQTFQGIIFFLIDENRGIYNLDPCSKTVFNPFDLNWRFFHHDYCDETSTLITLGQIFCENVCLFKYGSQKKSGQVIIVHVDYLVIRSAKPYLATPGATVHGHYGETLHEGDTLVTFIYEKSRSGDITQGLPKVEQVLEVRSIDSISTNLEKRVKAWNERISRILGNPWGFLISTELTIAQSRISLVNKIQKVYRSQGVQIHNRHLEIIVRQVTSKVLVSEDGMSNVFLPGELIGLLRAERAGRALDEAISYRAILLGITRASLNTQSFISEASFQETARVLAKAALRGRIDWLKGLKENVVLGGIIPVGTGFKKLVHHSRQHKNIHLEIKNKNLFEGKMRDILFHHREFLSSCIPNNFQ.

Zn(2+) contacts are provided by Cys-220, Cys-290, Cys-297, and Cys-300.

This sequence belongs to the RNA polymerase beta' chain family. RpoC2 subfamily. As to quaternary structure, in plastids the minimal PEP RNA polymerase catalytic core is composed of four subunits: alpha, beta, beta', and beta''. When a (nuclear-encoded) sigma factor is associated with the core the holoenzyme is formed, which can initiate transcription. Zn(2+) serves as cofactor.

The protein localises to the plastid. The protein resides in the chloroplast. It carries out the reaction RNA(n) + a ribonucleoside 5'-triphosphate = RNA(n+1) + diphosphate. In terms of biological role, DNA-dependent RNA polymerase catalyzes the transcription of DNA into RNA using the four ribonucleoside triphosphates as substrates. The polypeptide is DNA-directed RNA polymerase subunit beta'' (Lemna minor (Common duckweed)).